The chain runs to 381 residues: Putative glycosyltransferase EpsD (381 aa).

This sequence belongs to the glycosyltransferase group 1 family. Glycosyltransferase 4 subfamily.

May be involved in the production of the exopolysaccharide (EPS) component of the extracellular matrix during biofilm formation. EPS is responsible for the adhesion of chains of cells into bundles. Required for biofilm maintenance. This chain is Putative glycosyltransferase EpsD (epsD), found in Bacillus subtilis (strain 168).